A 417-amino-acid chain; its full sequence is E3 ubiquitin-protein ligase RNF135 (417 aa).

Residues 21 to 67 form an RING-type zinc finger; sequence CIICQGLLDQPTTLPCGHSFCLRCLHDLWVSKRGAVDGCPWACPICR. Disordered stretches follow at residues 95–118 and 143–173; these read EVEAGSEPEPAPAPRSAPQVTVQK and TQRPNLGSGQDNAQGTPPTDSSSEGEHSLDS. Coiled-coil stretches lie at residues 121 to 145 and 180 to 204; these read TNVIQELTDMVRQLVDDVKSLQTQR and SISQKKIQEILHNLEEIQEKLQGSV. Polar residues predominate over residues 143–164; it reads TQRPNLGSGQDNAQGTPPTDSS. Positions 225–417 constitute a B30.2/SPRY domain; that stretch reads PDQRRPAPRK…NYLEIKQLNT (193 aa).

Homodimer. Interacts (homodimer) with RIGI (double-stranded RNA-bound oligomeric form); involved in both RIGI ubiquitination, oligomerization into filaments associated with viral RNAs and the bridging of these filaments. Interacts with UBE2D3 and UBE2N; E2 ubiquitin ligases involved in RNF135-mediated ubiquitination of RIGI and activation of the RIG-I signaling pathway. Interacts with PCBP2. In terms of tissue distribution, ubiquitously expressed.

It is found in the cytoplasm. It localises to the stress granule. The catalysed reaction is S-ubiquitinyl-[E2 ubiquitin-conjugating enzyme]-L-cysteine + [acceptor protein]-L-lysine = [E2 ubiquitin-conjugating enzyme]-L-cysteine + N(6)-ubiquitinyl-[acceptor protein]-L-lysine.. The protein operates within protein modification; protein ubiquitination. Functionally, E2-dependent E3 ubiquitin-protein ligase that functions as a RIGI coreceptor in the sensing of viral RNAs in cell cytoplasm and the activation of the antiviral innate immune response. Together with the UBE2D3, UBE2N and UB2V1 E2 ligases, catalyzes the 'Lys-63'-linked polyubiquitination of RIGI oligomerized on viral RNAs, an essential step in the activation of the RIG-I signaling pathway. Through a ubiquitin-independent parallel mechanism, which consists in bridging RIGI filaments forming on longer viral RNAs, further activates the RIG-I signaling pathway. This second mechanism that synergizes with the ubiquitin-dependent one would thereby allow an RNA length-dependent regulation of the RIG-I signaling pathway. Associated with the E2 ligase UBE2N, also constitutively synthesizes unanchored 'Lys-63'-linked polyubiquitin chains that may also activate the RIG-I signaling pathway. It is not involved in the innate immune response against DNA viruses. This is E3 ubiquitin-protein ligase RNF135 from Mus musculus (Mouse).